Consider the following 229-residue polypeptide: Flagellar L-ring protein (229 aa).

A signal peptide spans 1 to 23 (MNPLTRVALAVAAFAALVLALSA). Cys-24 is lipidated: N-palmitoyl cysteine. Cys-24 carries S-diacylglycerol cysteine lipidation.

The protein belongs to the FlgH family. As to quaternary structure, the basal body constitutes a major portion of the flagellar organelle and consists of four rings (L,P,S, and M) mounted on a central rod.

Its subcellular location is the cell outer membrane. It is found in the bacterial flagellum basal body. Functionally, assembles around the rod to form the L-ring and probably protects the motor/basal body from shearing forces during rotation. The protein is Flagellar L-ring protein of Anaeromyxobacter dehalogenans (strain 2CP-1 / ATCC BAA-258).